Consider the following 281-residue polypeptide: 2-dehydro-3-deoxyphosphooctonate aldolase (281 aa).

The protein belongs to the KdsA family.

Its subcellular location is the cytoplasm. It catalyses the reaction D-arabinose 5-phosphate + phosphoenolpyruvate + H2O = 3-deoxy-alpha-D-manno-2-octulosonate-8-phosphate + phosphate. It functions in the pathway carbohydrate biosynthesis; 3-deoxy-D-manno-octulosonate biosynthesis; 3-deoxy-D-manno-octulosonate from D-ribulose 5-phosphate: step 2/3. The protein operates within bacterial outer membrane biogenesis; lipopolysaccharide biosynthesis. This is 2-dehydro-3-deoxyphosphooctonate aldolase from Pseudomonas putida (strain GB-1).